Here is a 165-residue protein sequence, read N- to C-terminus: Chorismate pyruvate-lyase (165 aa).

The substrate site is built by Met-35, Arg-77, Leu-115, and Glu-156.

The protein belongs to the UbiC family. In terms of assembly, monomer.

It localises to the cytoplasm. It carries out the reaction chorismate = 4-hydroxybenzoate + pyruvate. It participates in cofactor biosynthesis; ubiquinone biosynthesis. Its function is as follows. Removes the pyruvyl group from chorismate, with concomitant aromatization of the ring, to provide 4-hydroxybenzoate (4HB) for the ubiquinone pathway. This chain is Chorismate pyruvate-lyase, found in Citrobacter koseri (strain ATCC BAA-895 / CDC 4225-83 / SGSC4696).